We begin with the raw amino-acid sequence, 228 residues long: Ribonuclease 3 (228 aa).

An RNase III domain is found at Leu-7–Gly-132. Residue Glu-45 coordinates Mg(2+). Asp-49 is an active-site residue. Residues Asp-118 and Glu-121 each coordinate Mg(2+). Glu-121 is a catalytic residue. The 70-residue stretch at Asp-157–Arg-226 folds into the DRBM domain.

The protein belongs to the ribonuclease III family. In terms of assembly, homodimer. The cofactor is Mg(2+).

The protein resides in the cytoplasm. It catalyses the reaction Endonucleolytic cleavage to 5'-phosphomonoester.. In terms of biological role, digests double-stranded RNA. Involved in the processing of ribosomal RNA precursors and of some mRNAs. Complements an E.coli disruption mutant, but the E.coli enzyme does not cleave R.capsulatus rRNA precursor, showing substrate recognition is different. Probably also processes some mRNAs, and tRNAs when they are encoded in the rRNA operon. Probably processes pre-crRNA and tracrRNA of type II CRISPR loci if present in the organism. This chain is Ribonuclease 3 (rnc), found in Rhodobacter capsulatus (Rhodopseudomonas capsulata).